We begin with the raw amino-acid sequence, 147 residues long: Cytochrome c-type biogenesis protein CcmE (147 aa).

Topologically, residues 1-7 (MKPRHKR) are cytoplasmic. Residues 8–28 (AAIIAGGLAALGIAAYLVLNA) form a helical; Signal-anchor for type II membrane protein membrane-spanning segment. At 29-147 (FQSNLVFFFS…QIQKTIKSLK (119 aa)) the chain is on the periplasmic side. The heme site is built by His121 and Tyr125.

This sequence belongs to the CcmE/CycJ family.

The protein resides in the cell inner membrane. In terms of biological role, heme chaperone required for the biogenesis of c-type cytochromes. Transiently binds heme delivered by CcmC and transfers the heme to apo-cytochromes in a process facilitated by CcmF and CcmH. This Albidiferax ferrireducens (strain ATCC BAA-621 / DSM 15236 / T118) (Rhodoferax ferrireducens) protein is Cytochrome c-type biogenesis protein CcmE.